Here is a 1367-residue protein sequence, read N- to C-terminus: DNA-directed RNA polymerase subunit beta' (1367 aa).

The segment at 1–34 (MTSTSPKSRKSSSKRKGSKKKAARSKNVIPPLSK) is disordered. The span at 7-24 (KSRKSSSKRKGSKKKAAR) shows a compositional bias: basic residues. Zn(2+)-binding residues include C250, C317, C324, and C327. The interval 1306–1367 (SVLDDPSDAD…LQEEGLLSDE (62 aa)) is disordered. Low complexity predominate over residues 1355–1367 (LEGLQEEGLLSDE).

Belongs to the RNA polymerase beta' chain family. RpoC2 subfamily. As to quaternary structure, in cyanobacteria the RNAP catalytic core is composed of 2 alpha, 1 beta, 1 beta', 1 gamma and 1 omega subunit. When a sigma factor is associated with the core the holoenzyme is formed, which can initiate transcription. Zn(2+) is required as a cofactor.

The catalysed reaction is RNA(n) + a ribonucleoside 5'-triphosphate = RNA(n+1) + diphosphate. Its function is as follows. DNA-dependent RNA polymerase catalyzes the transcription of DNA into RNA using the four ribonucleoside triphosphates as substrates. The protein is DNA-directed RNA polymerase subunit beta' of Prochlorococcus marinus (strain SARG / CCMP1375 / SS120).